A 72-amino-acid chain; its full sequence is Translational regulator CsrA (72 aa).

The protein belongs to the CsrA/RsmA family. As to quaternary structure, homodimer; the beta-strands of each monomer intercalate to form a hydrophobic core, while the alpha-helices form wings that extend away from the core.

The protein localises to the cytoplasm. Its function is as follows. A translational regulator that binds mRNA to regulate translation initiation and/or mRNA stability. Usually binds in the 5'-UTR at or near the Shine-Dalgarno sequence preventing ribosome-binding, thus repressing translation. Its main target seems to be the major flagellin gene, while its function is anatagonized by FliW. This is Translational regulator CsrA from Lachnoclostridium phytofermentans (strain ATCC 700394 / DSM 18823 / ISDg) (Clostridium phytofermentans).